Here is a 506-residue protein sequence, read N- to C-terminus: U3 small nucleolar RNA-associated protein 18 homolog (506 aa).

Positions 1–11 (MSSDESSDGLE) are enriched in acidic residues. 2 disordered regions span residues 1–44 (MSSD…SQAK) and 69–126 (AKSV…PLNH). Residues 24 to 37 (EQEKPAKIKRERYI) are compositionally biased toward basic and acidic residues. 4 positions are modified to phosphoserine: S102, S104, S164, and S165. WD repeat units lie at residues 203 to 242 (YAEG…NERL), 331 to 370 (KQEG…IEHI), 372 to 413 (MDDG…ASKA), and 469 to 505 (EKVG…YFKG).

Belongs to the WD repeat UTP18 family. As to quaternary structure, component of U3 snoRNP complex.

It is found in the nucleus. Its subcellular location is the nucleolus. Functionally, component of a nucleolar small nuclear ribonucleoprotein particle (snoRNP) thought to participate in the processing and modification of pre-ribosomal RNA. Regulation of cell size by ribosome synthesis is an important parameter for stem cell maintenance and function. The polypeptide is U3 small nucleolar RNA-associated protein 18 homolog (wcd) (Drosophila melanogaster (Fruit fly)).